A 125-amino-acid polypeptide reads, in one-letter code: uncharacterized protein (125 aa).

2 disordered regions span residues 1 to 27 (MNKTVGPPTITPTGLSGGMNSTTGSSS) and 76 to 125 (NKNN…RFKK). Residues 18–27 (GMNSTTGSSS) show a composition bias toward low complexity.

This is an uncharacterized protein from Dictyostelium discoideum (Social amoeba).